We begin with the raw amino-acid sequence, 600 residues long: Proline--tRNA ligase (600 aa).

It belongs to the class-II aminoacyl-tRNA synthetase family. ProS type 1 subfamily. Homodimer.

It is found in the cytoplasm. It carries out the reaction tRNA(Pro) + L-proline + ATP = L-prolyl-tRNA(Pro) + AMP + diphosphate. Functionally, catalyzes the attachment of proline to tRNA(Pro) in a two-step reaction: proline is first activated by ATP to form Pro-AMP and then transferred to the acceptor end of tRNA(Pro). As ProRS can inadvertently accommodate and process non-cognate amino acids such as alanine and cysteine, to avoid such errors it has two additional distinct editing activities against alanine. One activity is designated as 'pretransfer' editing and involves the tRNA(Pro)-independent hydrolysis of activated Ala-AMP. The other activity is designated 'posttransfer' editing and involves deacylation of mischarged Ala-tRNA(Pro). The misacylated Cys-tRNA(Pro) is not edited by ProRS. The sequence is that of Proline--tRNA ligase from Prochlorococcus marinus (strain MIT 9215).